The sequence spans 779 residues: Ribosome-releasing factor 2, mitochondrial (779 aa).

The tr-type G domain maps to 68–353 (AKIRNIGIMA…AVTTYLPSPE (286 aa)). Residues 77 to 84 (AHIDAGKT), 141 to 145 (DTPGH), and 195 to 198 (NKMD) contribute to the GTP site.

This sequence belongs to the TRAFAC class translation factor GTPase superfamily. Classic translation factor GTPase family. EF-G/EF-2 subfamily.

It localises to the mitochondrion. The catalysed reaction is GTP + H2O = GDP + phosphate + H(+). Functionally, mitochondrial GTPase that mediates the disassembly of ribosomes from messenger RNA at the termination of mitochondrial protein biosynthesis. Acts in collaboration with MRRF. GTP hydrolysis follows the ribosome disassembly and probably occurs on the ribosome large subunit. Not involved in the GTP-dependent ribosomal translocation step during translation elongation. This Mus musculus (Mouse) protein is Ribosome-releasing factor 2, mitochondrial (Gfm2).